The chain runs to 144 residues: Maximins 3/H11 type 2 (144 aa).

The signal sequence occupies residues 1-18; sequence MHFKYIVAVSFLIASAYA. Propeptides lie at residues 19-43 and 73-122; these read RSVQ…REIR and RTAE…KKEK. Isoleucine 143 bears the Isoleucine amide mark.

It belongs to the bombinin family. Expressed by the skin glands.

The protein localises to the secreted. Maximin-3 shows antibacterial activity against both Gram-positive and Gram-negative bacteria. It also shows antimicrobial activity against the fungus C.albicans, but not against A.flavus nor P.uticale. It has little hemolytic activity. It possess a significant cytotoxicity against tumor cell lines. It possess a significant anti-HIV activity. It shows high spermicidal activity. Functionally, maximin-H11 shows antimicrobial activity against bacteria and against the fungus C.albicans. Shows strong hemolytic activity. The protein is Maximins 3/H11 type 2 of Bombina maxima (Giant fire-bellied toad).